We begin with the raw amino-acid sequence, 303 residues long: RING finger protein 148 (303 aa).

An N-terminal signal peptide occupies residues 1-34 (MSLLRITSSAHSSASSRLWRLGIFLLLSLPDSKG). Asparagine 43 is a glycosylation site (N-linked (GlcNAc...) asparagine). The PA domain maps to 65–167 (HSPLERVSGV…LKGMELLHLI (103 aa)). Residues 186–208 (WLSHYIMSLFTFLTATVAYLFLY) form a helical membrane-spanning segment. Residues 256–297 (CVVCFDIYKPQDVVRILTCKHIFHKACIDPWLLAHRTCPMCK) form an RING-type; atypical zinc finger.

It is found in the membrane. This Bos taurus (Bovine) protein is RING finger protein 148 (RNF148).